Consider the following 779-residue polypeptide: Filament-like plant protein 1 (779 aa).

The span at 1 to 14 shows a compositional bias: basic and acidic residues; the sequence is MEKRKRESSERSFG. Disordered regions lie at residues 1-55, 253-274, and 315-336; these read MEKR…ETEK, ASFN…MDVS, and PETP…VVVP. Positions 47-200 form a coiled coil; sequence VSLEVETEKE…KENVMLRHEL (154 aa). Residues 256–272 show a composition bias toward basic and acidic residues; it reads NDHRSTDSHSDGGERMD. Residues 324–336 are compositionally biased toward low complexity; it reads SGPESVTEEVVVP. Residues 337–674 are a coiled coil; the sequence is SENSLASEIE…ANCQKTIASL (338 aa). The segment covering 718 to 731 has biased composition (basic and acidic residues); that stretch reads FMTRNHPESIKPTK. The segment at 718–764 is disordered; it reads FMTRNHPESIKPTKETSPSSSSSTASAAVSMPVSTNRGSSEKNRNGF. A compositionally biased stretch (low complexity) spans 733 to 752; it reads TSPSSSSSTASAAVSMPVST.

The protein belongs to the FPP family. Interacts with WPP/MAF proteins.

This chain is Filament-like plant protein 1 (FPP1), found in Arabidopsis thaliana (Mouse-ear cress).